Consider the following 283-residue polypeptide: V-set domain containing T-cell activation inhibitor 1 (283 aa).

A signal peptide spans 1 to 24 (MASLGQIIFWSIINIIIILAGAIA). 2 Ig-like V-type domains span residues 35–144 (HFIT…ANLE) and 153–241 (PEIN…IKVT). 2 disulfide bridges follow: Cys-56/Cys-130 and Cys-168/Cys-225. A glycan (N-linked (GlcNAc...) asparagine) is linked at Asn-216. A lipid anchor (GPI-anchor amidated glycine) is attached at Gly-257. Positions 258 to 283 (PSPCVFSSAFVAGWALLSLSCCLMLR) are cleaved as a propeptide — removed in mature form.

This sequence belongs to the immunoglobulin superfamily. BTN/MOG family. Post-translationally, N-glycosylated. In terms of tissue distribution, expressed on the surface of professional antigen-presenting cells (at protein level). Widely expressed, including in kidney, liver, lung, pancreas, placenta, prostate, spleen, testis and thymus.

It is found in the cell membrane. Functionally, negatively regulates T-cell-mediated immune response by inhibiting T-cell activation, proliferation, cytokine production and development of cytotoxicity. When expressed on the cell surface of tumor macrophages, plays an important role, together with regulatory T-cells (Treg), in the suppression of tumor-associated antigen-specific T-cell immunity. Involved in promoting epithelial cell transformation. This chain is V-set domain containing T-cell activation inhibitor 1, found in Mus musculus (Mouse).